Consider the following 191-residue polypeptide: Octanoyltransferase (191 aa).

The region spanning 10-185 (ENSHDEIWLV…NILALLNNPP (176 aa)) is the BPL/LPL catalytic domain. Substrate-binding positions include 49 to 56 (RGGQVTYH), 116 to 118 (SLG), and 129 to 131 (GLA). C147 (acyl-thioester intermediate) is an active-site residue.

Belongs to the LipB family.

It is found in the cytoplasm. The enzyme catalyses octanoyl-[ACP] + L-lysyl-[protein] = N(6)-octanoyl-L-lysyl-[protein] + holo-[ACP] + H(+). It participates in protein modification; protein lipoylation via endogenous pathway; protein N(6)-(lipoyl)lysine from octanoyl-[acyl-carrier-protein]: step 1/2. Its function is as follows. Catalyzes the transfer of endogenously produced octanoic acid from octanoyl-acyl-carrier-protein onto the lipoyl domains of lipoate-dependent enzymes. Lipoyl-ACP can also act as a substrate although octanoyl-ACP is likely to be the physiological substrate. This is Octanoyltransferase from Salmonella choleraesuis (strain SC-B67).